Consider the following 456-residue polypeptide: tRNA-2-methylthio-N(6)-dimethylallyladenosine synthase (456 aa).

The 117-residue stretch at 18–134 folds into the MTTase N-terminal domain; it reads KKLFIETYGC…LPDLVASVEA (117 aa). [4Fe-4S] cluster contacts are provided by Cys27, Cys63, Cys98, Cys172, Cys176, and Cys179. A Radical SAM core domain is found at 158-390; it reads CGNHISGFVS…IELQNRLSAE (233 aa). The TRAM domain maps to 393–456; the sequence is ARDVGKTFEV…SATLKGEEVF (64 aa).

The protein belongs to the methylthiotransferase family. MiaB subfamily. Monomer. It depends on [4Fe-4S] cluster as a cofactor.

Its subcellular location is the cytoplasm. It carries out the reaction N(6)-dimethylallyladenosine(37) in tRNA + (sulfur carrier)-SH + AH2 + 2 S-adenosyl-L-methionine = 2-methylsulfanyl-N(6)-dimethylallyladenosine(37) in tRNA + (sulfur carrier)-H + 5'-deoxyadenosine + L-methionine + A + S-adenosyl-L-homocysteine + 2 H(+). Functionally, catalyzes the methylthiolation of N6-(dimethylallyl)adenosine (i(6)A), leading to the formation of 2-methylthio-N6-(dimethylallyl)adenosine (ms(2)i(6)A) at position 37 in tRNAs that read codons beginning with uridine. The chain is tRNA-2-methylthio-N(6)-dimethylallyladenosine synthase from Phocaeicola vulgatus (strain ATCC 8482 / DSM 1447 / JCM 5826 / CCUG 4940 / NBRC 14291 / NCTC 11154) (Bacteroides vulgatus).